Reading from the N-terminus, the 197-residue chain is Na(+)-translocating NADH-quinone reductase subunit E (197 aa).

A run of 6 helical transmembrane segments spans residues 11–31 (SVFI…FLAV), 35–55 (VSTA…SVPA), 76–96 (FLKF…LEMF), 108–128 (LGIY…VSFM), 139–159 (VVYG…LAGI), and 175–195 (LGIT…FSGI).

Belongs to the NqrDE/RnfAE family. Composed of six subunits; NqrA, NqrB, NqrC, NqrD, NqrE and NqrF.

The protein resides in the cell inner membrane. It carries out the reaction a ubiquinone + n Na(+)(in) + NADH + H(+) = a ubiquinol + n Na(+)(out) + NAD(+). In terms of biological role, NQR complex catalyzes the reduction of ubiquinone-1 to ubiquinol by two successive reactions, coupled with the transport of Na(+) ions from the cytoplasm to the periplasm. NqrA to NqrE are probably involved in the second step, the conversion of ubisemiquinone to ubiquinol. The polypeptide is Na(+)-translocating NADH-quinone reductase subunit E (Neisseria meningitidis serogroup A / serotype 4A (strain DSM 15465 / Z2491)).